Consider the following 787-residue polypeptide: Serine proteinase stubble (787 aa).

The segment at 1–22 is disordered; the sequence is MKQPTLIRPRLRHRRSTPAAAT. Over 1–58 the chain is Cytoplasmic; sequence MKQPTLIRPRLRHRRSTPAAATKMCPKRHWLVNNRAAGSRGSGGAAARSRRSLDQIVE. The chain crosses the membrane as a helical; Signal-anchor for type II membrane protein span at residues 59–80; sequence VLVALIVVNCLATAAAALITPP. At 81 to 787 the chain is on the extracellular side; the sequence is DSLESLGSLG…FTPWILEHVR (707 aa). Asn-177 carries N-linked (GlcNAc...) asparagine glycosylation. The segment at 225-516 is disordered; that stretch reads AGTLVIRPSG…EISDSSIPDA (292 aa). Composition is skewed to low complexity over residues 262–280, 287–303, 358–368, 393–438, and 449–485; these read SASHPSSSSSSSSSSNPNS, QQQQQQQHQQNQQNHWQ, PSTSTSTTSTS, SLAA…RTTT, and TTATSSSSTSTTSSKTPTTTRPISSSSSSSSGIVTSS. Over residues 502–512 the composition is skewed to polar residues; the sequence is GIETNEISDSS. Cystine bridges form between Cys-532/Cys-660 and Cys-575/Cys-591. The 244-residue stretch at 544-787 folds into the Peptidase S1 domain; sequence IVGGKSAAFG…FTPWILEHVR (244 aa). Active-site charge relay system residues include His-590 and Asp-640. Asn-672 carries N-linked (GlcNAc...) asparagine glycosylation. 2 disulfides stabilise this stretch: Cys-704–Cys-723 and Cys-734–Cys-763. Ser-738 functions as the Charge relay system in the catalytic mechanism.

Belongs to the peptidase S1 family. Post-translationally, may activate itself by proteolytic cleavage.

The protein localises to the membrane. In terms of biological role, hormone dependent protease required for epithelial morphogenesis, including the formation of bristles, legs, and wings. Has a dual function, detaches imaginal disk cells from extracellular matrices through its extracellular proteolytic domain and transmits an outside-to-inside signal to its intracellular domain to modify the cytoskeleton during morphogenesis. This is Serine proteinase stubble (Sb) from Drosophila melanogaster (Fruit fly).